A 93-amino-acid chain; its full sequence is Alpha-conotoxin RVIIIA (93 aa).

The N-terminal stretch at 1 to 20 (MMSKMGAMFVLLLLFTLASS) is a signal peptide. Residues 21-46 (QQEGDVQARKTHPKREFQRILLRSGR) constitute a propeptide that is removed on maturation. Glu63 and Glu68 each carry 4-carboxyglutamate.

Post-translationally, contains 5 disulfide bonds. In terms of tissue distribution, expressed by the venom duct.

It localises to the secreted. In terms of biological role, alpha-conotoxins act on postsynaptic membranes, they bind to the nicotinic acetylcholine receptors (nAChR) and thus inhibit them. This toxin provokes a nearly complete and slowly reversible inhibition of both the human adult (alpha-1-beta-1-epsilon-delta (CHRNA1-CHRNB1-CHRND-CHRNE)) and human fetal (alpha-1-beta-1-gamma-delta (CHRNA1-CHRNB1-CHRNG-CHRND)) neuromuscular nAChRs. It also reversibly blocks the neuromuscular alpha-7/CHRNA7 nAChR, the alpha-3-beta-2 (CHRNA3-CHRNB2) nAChR, the chimeric alpha-6 or -3/beta-3 or -2 (CHRNA6/CHRNA3-CHRNB2-CHRNB3) nAChR and with a low potency the alpha-4-beta-2 (CHRNA4-CHRNB2) nAChR. In addition, the toxin also inhibits the alpha-9-alpha-10 (CHRNA9-CHRNA10) nAChR with a high potency (IC(50)=187 nM). In Conus radiatus (Rayed cone), this protein is Alpha-conotoxin RVIIIA.